A 223-amino-acid chain; its full sequence is Voltage-dependent calcium channel gamma-1 subunit (223 aa).

The Cytoplasmic portion of the chain corresponds to 1–10; sequence MSQTKTLKVR. Residues 11-29 traverse the membrane as a helical segment; it reads VALLCILVGIVLALVAVVT. Topologically, residues 30 to 109 are extracellular; it reads DHWAVLSPHV…TQKEYSISAA (80 aa). 2 N-linked (GlcNAc...) asparagine glycosylation sites follow: Asn43 and Asn80. A disulfide bond links Cys57 and Cys81. The helical transmembrane segment at 110-130 threads the bilayer; sequence AIAIFSLGFIIVGTLCALLSF. At 131-135 the chain is on the cytoplasmic side; the sequence is RKKRD. Residues 136 to 156 form a helical membrane-spanning segment; that stretch reads YLLRPASMFYIFAGLCLSVSA. Residues 157–180 are Extracellular-facing; the sequence is EVMRQSVQRMVDSEHTAWIAHSLA. Residues 181–205 traverse the membrane as a helical segment; it reads WSFICACVAAALLLVGGLALLLLAL. Over 206–223 the chain is Cytoplasmic; sequence PRMPRDPWESCMDAEPEH.

Belongs to the PMP-22/EMP/MP20 family. CACNG subfamily. In terms of assembly, component of a calcium channel complex consisting of a pore-forming alpha subunit (CACNA1S) and the ancillary subunits CACNB1 or CACNB2, CACNG1 and CACNA2D1. The channel complex contains alpha, beta, gamma and delta subunits in a 1:1:1:1 ratio, i.e. it contains either CACNB1 or CACNB2. Post-translationally, N-glycosylated.

The protein resides in the cell membrane. Its subcellular location is the sarcolemma. Its function is as follows. Regulatory subunit of the voltage-gated calcium channel that gives rise to L-type calcium currents in skeletal muscle. Regulates channel inactivation kinetics. The sequence is that of Voltage-dependent calcium channel gamma-1 subunit (CACNG1) from Bos taurus (Bovine).